The sequence spans 84 residues: Limulin (84 aa).

Residues 6-84 enclose the Pentraxin (PTX) domain; it reads ITSKVKFPPS…DEQGDFLFNV (79 aa). Ca(2+) contacts are provided by D67 and N68.

It belongs to the pentraxin family. Homopentamer. Pentraxin (or pentaxin) have a discoid arrangement of 5 non-covalently bound subunits. The cofactor is Ca(2+). Post-translationally, a disulfide bond links Cys-38 to a Cys in the C-terminal half of the chain of 163 residues.

Functionally, lectin that binds sialic acid. Displays antiviral activity and therefore may contribute to defense against infections. The sequence is that of Limulin from Limulus polyphemus (Atlantic horseshoe crab).